The following is a 162-amino-acid chain: NADH-quinone oxidoreductase subunit I (162 aa).

4Fe-4S ferredoxin-type domains lie at 53–83 (LRRYPNGEERCIACKLCEAICPALAITIEAE) and 93–122 (TRYDIDLTKCIFCGFCEEACPVDAVVETRI). [4Fe-4S] cluster is bound by residues cysteine 63, cysteine 66, cysteine 69, cysteine 73, cysteine 102, cysteine 105, cysteine 108, and cysteine 112.

Belongs to the complex I 23 kDa subunit family. In terms of assembly, NDH-1 is composed of 14 different subunits. Subunits NuoA, H, J, K, L, M, N constitute the membrane sector of the complex. The cofactor is [4Fe-4S] cluster.

Its subcellular location is the cell inner membrane. It catalyses the reaction a quinone + NADH + 5 H(+)(in) = a quinol + NAD(+) + 4 H(+)(out). In terms of biological role, NDH-1 shuttles electrons from NADH, via FMN and iron-sulfur (Fe-S) centers, to quinones in the respiratory chain. The immediate electron acceptor for the enzyme in this species is believed to be ubiquinone. Couples the redox reaction to proton translocation (for every two electrons transferred, four hydrogen ions are translocated across the cytoplasmic membrane), and thus conserves the redox energy in a proton gradient. This chain is NADH-quinone oxidoreductase subunit I, found in Dechloromonas aromatica (strain RCB).